Here is a 75-residue protein sequence, read N- to C-terminus: Small ribosomal subunit protein bS18c (75 aa).

This sequence belongs to the bacterial ribosomal protein bS18 family. As to quaternary structure, part of the 30S ribosomal subunit.

It localises to the plastid. Its subcellular location is the chloroplast. This is Small ribosomal subunit protein bS18c from Angiopteris evecta (Mule's foot fern).